The following is a 267-amino-acid chain: MKKVTIRDFIKKKSTKEKITILTAYDYPTAKIISNTGLDSILVGDSLGMVVLGYANTLNVTMRDMISHTRAVARANPPQLIVADMPFLSYEIDTKSAVKNAGLLVKAGSDAIKLEGGEEMKDTVKAIVKAGIPVMGHIGLTPQRFLRLGGFRTIGKTKQEEDQLIKDSLELEDAGVFSLVIENTYVDIAKRITEKLNIPTICIGAGPYCDGQVLVINDLLGLSEFTPYFAKSYVNLKEIISNAINQYIIDVKNNKFPEKQHYKEKES.

Aspartate 45 and aspartate 84 together coordinate Mg(2+). 3-methyl-2-oxobutanoate-binding positions include 45-46 (DS), aspartate 84, and lysine 113. Glutamate 115 lines the Mg(2+) pocket. The active-site Proton acceptor is the glutamate 182.

It belongs to the PanB family. Homodecamer; pentamer of dimers. Requires Mg(2+) as cofactor.

It is found in the cytoplasm. The enzyme catalyses 3-methyl-2-oxobutanoate + (6R)-5,10-methylene-5,6,7,8-tetrahydrofolate + H2O = 2-dehydropantoate + (6S)-5,6,7,8-tetrahydrofolate. Its pathway is cofactor biosynthesis; coenzyme A biosynthesis. In terms of biological role, catalyzes the reversible reaction in which hydroxymethyl group from 5,10-methylenetetrahydrofolate is transferred onto alpha-ketoisovalerate to form ketopantoate. In Saccharolobus islandicus (strain M.16.27) (Sulfolobus islandicus), this protein is 3-methyl-2-oxobutanoate hydroxymethyltransferase.